The following is a 345-amino-acid chain: NADH-quinone oxidoreductase subunit H (345 aa).

Helical transmembrane passes span 13–33 (VIIL…LLFL), 84–104 (FILA…VIPF), 115–135 (VAIL…IMGG), 161–181 (IGLI…GDIV), 190–210 (LFNW…ISCL), 248–268 (YIAI…GWLS), 277–297 (PLWM…VKAI), and 309–329 (LGWK…AFAA).

It belongs to the complex I subunit 1 family. In terms of assembly, NDH-1 is composed of 14 different subunits. Subunits NuoA, H, J, K, L, M, N constitute the membrane sector of the complex.

The protein localises to the cell inner membrane. The enzyme catalyses a quinone + NADH + 5 H(+)(in) = a quinol + NAD(+) + 4 H(+)(out). NDH-1 shuttles electrons from NADH, via FMN and iron-sulfur (Fe-S) centers, to quinones in the respiratory chain. The immediate electron acceptor for the enzyme in this species is believed to be ubiquinone. Couples the redox reaction to proton translocation (for every two electrons transferred, four hydrogen ions are translocated across the cytoplasmic membrane), and thus conserves the redox energy in a proton gradient. This subunit may bind ubiquinone. The chain is NADH-quinone oxidoreductase subunit H from Ruegeria sp. (strain TM1040) (Silicibacter sp.).